Consider the following 58-residue polypeptide: Preprotein translocase subunit SecG (58 aa).

Residues 1–32 (MARKRRKGGEGLVTAIGLVRFYEEVEEKIKVP) are Cytoplasmic-facing. The chain crosses the membrane as a helical span at residues 33–54 (PEAVIGAAFALSIMTIALDLLL). At 55–58 (KAAR) the chain is on the extracellular side.

It belongs to the SEC61-beta family. Component of the protein translocase complex. Heterotrimer consisting of alpha (SecY), beta (SecG) and gamma (SecE) subunits. Can form oligomers of the heterotrimer.

It localises to the cell membrane. In terms of biological role, involved in protein export. The function of the beta subunit is unknown, but it may be involved in stabilization of the trimeric complex. This is Preprotein translocase subunit SecG from Ignicoccus hospitalis (strain KIN4/I / DSM 18386 / JCM 14125).